Here is a 156-residue protein sequence, read N- to C-terminus: Acyl carrier protein, mitochondrial (156 aa).

A mitochondrion-targeting transit peptide spans 1–68; the sequence is MAVRVLCACV…GRVTQLCRQY (68 aa). The region spanning 77–152 is the Carrier domain; that stretch reads EGIKDRVLYV…EIVDYIADKK (76 aa). Position 88 is an N6-acetyllysine (K88). An O-(pantetheine 4'-phosphoryl)serine modification is found at S112.

As to quaternary structure, mammalian complex I is composed of 45 different subunits. Interacts with ETFRF1. Identified in a complex composed of MALSU1, MIEF1 upstream open reading frame protein and NDUFAB1; within the trimeric complex MIEF1 upstream open reading frame protein functions as a bridging scaffold that interacts with MALSU1 on one side, and with NDUFAB1 on the other side. The complex interacts with the mitochondrial large ribosomal subunit. Interacts with alpha-1-microglobulin chain; this interaction is required for the maintenance of mitochondrial redox homeostasis. Component of the mitochondrial core iron-sulfur cluster (ISC) complex composed of NFS1, LYRM4, NDUFAB1, ISCU, FXN, and FDX2; this complex is a heterohexamer containing two copies of each monomer. Component of the cyteine desulfurase complex composed of NFS1, LYRM4 and NDUFAB1; this complex contributes to the stability and cysteine desulfurase activity of NFS1. Phosphopantetheinylation at Ser-112 is essential for interactions with LYR motif-containing proteins.

It localises to the mitochondrion. Its function is as follows. Carrier of the growing fatty acid chain in fatty acid biosynthesis. Accessory and non-catalytic subunit of the mitochondrial membrane respiratory chain NADH dehydrogenase (Complex I), which functions in the transfer of electrons from NADH to the respiratory chain. Accessory protein, of the core iron-sulfur cluster (ISC) assembly complex, that regulates, in association with LYRM4, the stability and the cysteine desulfurase activity of NFS1 and participates in the [2Fe-2S] clusters assembly on the scaffolding protein ISCU. The core iron-sulfur cluster (ISC) assembly complex is involved in the de novo synthesis of a [2Fe-2S] cluster, the first step of the mitochondrial iron-sulfur protein biogenesis. This process is initiated by the cysteine desulfurase complex (NFS1:LYRM4:NDUFAB1) that produces persulfide which is delivered on the scaffold protein ISCU in a FXN-dependent manner. Then this complex is stabilized by FDX2 which provides reducing equivalents to accomplish the [2Fe-2S] cluster assembly. Finally, the [2Fe-2S] cluster is transferred from ISCU to chaperone proteins, including HSCB, HSPA9 and GLRX5. This chain is Acyl carrier protein, mitochondrial, found in Bos taurus (Bovine).